The chain runs to 277 residues: Anamorsin homolog (277 aa).

The tract at residues 1–160 is N-terminal SAM-like domain; that stretch reads MDTKRMLQNS…NIGSSFALKK (160 aa). The linker stretch occupies residues 161-188; the sequence is SIKSPVKVQNDDYSDLIDEDSLLTEEDL. The [2Fe-2S] cluster site is built by C199, C208, C211, and C213. Residues 199–213 form a fe-S binding site A region; that stretch reads CEVGSTRKACKNCTC. [4Fe-4S] cluster-binding residues include C238, C241, C249, and C252. 2 consecutive short sequence motifs (cx2C motif) follow at residues 238–241 and 249–252; these read CGSC and CGTC. Residues 238 to 252 form a fe-S binding site B region; the sequence is CGSCGLGDAFRCGTC.

The protein belongs to the anamorsin family. Monomer. The cofactor is [2Fe-2S] cluster. [4Fe-4S] cluster serves as cofactor.

The protein localises to the cytoplasm. Its subcellular location is the mitochondrion intermembrane space. In terms of biological role, component of the cytosolic iron-sulfur (Fe-S) protein assembly (CIA) machinery. Required for the maturation of extramitochondrial Fe-S proteins. Part of an electron transfer chain functioning in an early step of cytosolic Fe-S biogenesis, facilitating the de novo assembly of a [4Fe-4S] cluster on the cytosolic Fe-S scaffold complex. Electrons are transferred from NADPH via a FAD- and FMN-containing diflavin oxidoreductase. Together with the diflavin oxidoreductase, also required for the assembly of the diferric tyrosyl radical cofactor of ribonucleotide reductase (RNR), probably by providing electrons for reduction during radical cofactor maturation in the catalytic small subunit. This is Anamorsin homolog from Populus trichocarpa (Western balsam poplar).